We begin with the raw amino-acid sequence, 304 residues long: Large ribosomal subunit protein uL18 (304 aa).

Residues 285–304 (LNALNSSAGADDDDEEEDDE) are disordered. Acidic residues predominate over residues 294 to 304 (ADDDDEEEDDE).

The protein belongs to the universal ribosomal protein uL18 family. As to quaternary structure, component of the large ribosomal subunit (LSU).

The protein localises to the cytoplasm. It localises to the nucleus. Functionally, component of the ribosome, a large ribonucleoprotein complex responsible for the synthesis of proteins in the cell. The small ribosomal subunit (SSU) binds messenger RNAs (mRNAs) and translates the encoded message by selecting cognate aminoacyl-transfer RNA (tRNA) molecules. The large subunit (LSU) contains the ribosomal catalytic site termed the peptidyl transferase center (PTC), which catalyzes the formation of peptide bonds, thereby polymerizing the amino acids delivered by tRNAs into a polypeptide chain. The nascent polypeptides leave the ribosome through a tunnel in the LSU and interact with protein factors that function in enzymatic processing, targeting, and the membrane insertion of nascent chains at the exit of the ribosomal tunnel. The protein is Large ribosomal subunit protein uL18 (RPL5A) of Oryza sativa subsp. indica (Rice).